Reading from the N-terminus, the 176-residue chain is Ribosome maturation factor RimM (176 aa).

Positions 103–176 (QNDEYYFYEI…KIVVKELEWI (74 aa)) constitute a PRC barrel domain.

It belongs to the RimM family. As to quaternary structure, binds ribosomal protein uS19.

It is found in the cytoplasm. Functionally, an accessory protein needed during the final step in the assembly of 30S ribosomal subunit, possibly for assembly of the head region. Essential for efficient processing of 16S rRNA. May be needed both before and after RbfA during the maturation of 16S rRNA. It has affinity for free ribosomal 30S subunits but not for 70S ribosomes. The protein is Ribosome maturation factor RimM of Thermotoga neapolitana (strain ATCC 49049 / DSM 4359 / NBRC 107923 / NS-E).